Consider the following 675-residue polypeptide: INO80 complex subunit D (675 aa).

Disordered regions lie at residues methionine 1–glutamine 39, threonine 183–proline 203, leucine 274–valine 324, aspartate 473–lysine 523, and valine 627–serine 675. Low complexity-rich tracts occupy residues glutamine 282 to isoleucine 318, asparagine 482 to asparagine 519, and asparagine 634 to serine 648. Over residues glutamate 664–serine 675 the composition is skewed to basic and acidic residues.

The protein belongs to the INO80D family. Component of the chromatin-remodeling INO80 complex.

It localises to the nucleus. Functionally, putative regulatory component of the chromatin remodeling INO80 complex which is involved in transcriptional regulation, DNA replication and probably DNA repair. The polypeptide is INO80 complex subunit D (Dictyostelium discoideum (Social amoeba)).